The primary structure comprises 341 residues: L-threonine 3-dehydrogenase (341 aa).

Cysteine 38 serves as a coordination point for Zn(2+). Catalysis depends on charge relay system residues threonine 40 and histidine 43. Residues histidine 63, glutamate 64, cysteine 93, cysteine 96, cysteine 99, and cysteine 107 each coordinate Zn(2+). Residues isoleucine 175, aspartate 195, arginine 200, 262–264 (LGI), and 286–287 (IY) contribute to the NAD(+) site.

It belongs to the zinc-containing alcohol dehydrogenase family. In terms of assembly, homotetramer. It depends on Zn(2+) as a cofactor.

The protein resides in the cytoplasm. It carries out the reaction L-threonine + NAD(+) = (2S)-2-amino-3-oxobutanoate + NADH + H(+). The protein operates within amino-acid degradation; L-threonine degradation via oxydo-reductase pathway; glycine from L-threonine: step 1/2. Its function is as follows. Catalyzes the NAD(+)-dependent oxidation of L-threonine to 2-amino-3-ketobutyrate. The protein is L-threonine 3-dehydrogenase of Chromobacterium violaceum (strain ATCC 12472 / DSM 30191 / JCM 1249 / CCUG 213 / NBRC 12614 / NCIMB 9131 / NCTC 9757 / MK).